A 168-amino-acid polypeptide reads, in one-letter code: Sperm acrosome-associated protein 9 (168 aa).

As to quaternary structure, microtubule inner protein component of sperm flagellar doublet microtubules. Interacts with CABP1 and CALR. Interacts with INCA1. Interacts with microtubules. Expressed in sperm (at protein level). Expressed from almost all the cell types of testis, with abundant expression in round and elongated spermatids (at protein level). Predominantly expressed in tissues containing motile cilia.

The protein resides in the cytoplasm. Its subcellular location is the cytoplasmic vesicle. The protein localises to the secretory vesicle. It is found in the acrosome. It localises to the cytoskeleton. The protein resides in the cilium basal body. Its subcellular location is the flagellum axoneme. The protein localises to the cilium axoneme. It is found in the nucleus. Microtubule inner protein (MIP) part of the dynein-decorated doublet microtubules (DMTs) of multiciliated respiratory cells and the distal singlet microtubules of monoflagellated spermatozoa. Forms an extensive interaction network cross-linking the lumen of axonemal doublet microtubules. In Mus musculus (Mouse), this protein is Sperm acrosome-associated protein 9.